The sequence spans 195 residues: Dual-action ribosomal maturation protein DarP (195 aa).

Belongs to the DarP family.

Its subcellular location is the cytoplasm. Its function is as follows. Member of a network of 50S ribosomal subunit biogenesis factors which assembles along the 30S-50S interface, preventing incorrect 23S rRNA structures from forming. Promotes peptidyl transferase center (PTC) maturation. The sequence is that of Dual-action ribosomal maturation protein DarP from Stenotrophomonas maltophilia (strain K279a).